The following is a 582-amino-acid chain: Choline kinase (582 aa).

The interval 1 to 36 (MVQESRPGSVRSYSVGYQARSRSSSQRRHSLTRQRS) is disordered. Serine 30 is subject to Phosphoserine; by PKA. 2 positions are modified to phosphoserine: serine 48 and serine 51. Position 54 is a phosphothreonine (threonine 54). Serine 85 is subject to Phosphoserine; by PKA.

This sequence belongs to the choline/ethanolamine kinase family. In terms of assembly, monomer. Interacts with NAP1. Mg(2+) is required as a cofactor.

Its subcellular location is the cytoplasm. The catalysed reaction is choline + ATP = phosphocholine + ADP + H(+). It carries out the reaction ethanolamine + ATP = phosphoethanolamine + ADP + H(+). The protein operates within phospholipid metabolism; phosphatidylcholine biosynthesis; phosphocholine from choline: step 1/1. In terms of biological role, catalyzes the committed step in the synthesis of phosphatidylcholine by the CDP-choline pathway. Also exhibits ethanolamine kinase activity but it is a poor substrate at 14% efficiency compared with choline. This chain is Choline kinase, found in Saccharomyces cerevisiae (strain ATCC 204508 / S288c) (Baker's yeast).